We begin with the raw amino-acid sequence, 512 residues long: 2,3-bisphosphoglycerate-independent phosphoglycerate mutase (512 aa).

Residues D12 and S62 each contribute to the Mn(2+) site. S62 functions as the Phosphoserine intermediate in the catalytic mechanism. Substrate contacts are provided by residues H123, 154–155 (RD), R181, R187, 253–256 (RPDR), and K336. The Mn(2+) site is built by D403, H407, D444, H445, and H462.

Belongs to the BPG-independent phosphoglycerate mutase family. As to quaternary structure, monomer. Requires Mn(2+) as cofactor.

It carries out the reaction (2R)-2-phosphoglycerate = (2R)-3-phosphoglycerate. It functions in the pathway carbohydrate degradation; glycolysis; pyruvate from D-glyceraldehyde 3-phosphate: step 3/5. Its function is as follows. Catalyzes the interconversion of 2-phosphoglycerate and 3-phosphoglycerate. The protein is 2,3-bisphosphoglycerate-independent phosphoglycerate mutase of Onion yellows phytoplasma (strain OY-M).